A 295-amino-acid chain; its full sequence is MADYLVKSLIDGGMFRAYVVDATETVAEAQQRHDTWSAATAALGRTLIGTMLLSTSLLKGDEKLTVKVNGHGPVGAIVVDGNANGTVKGYLQYPHTSLPLNEKHKIDVKKAVGVNGMLTVTKDQGLGQPYTGQVPLVSGELGEDFTYYLAKSEQIPSAVGVSVFVQPNNTVKVAGGFLIQVMPGASDEAIARLEQRIKEMPMVSELLLAGQTPEEILALLFKEEKIKIVQKMPVGFKCDCSKDRFAQSLASIQPAALQEMIDEDHGAEAVCHFCGTKYQFSEDDLRAILTEAQAK.

2 disulfides stabilise this stretch: cysteine 238–cysteine 240 and cysteine 271–cysteine 274.

Belongs to the HSP33 family. Post-translationally, under oxidizing conditions two disulfide bonds are formed involving the reactive cysteines. Under reducing conditions zinc is bound to the reactive cysteines and the protein is inactive.

It localises to the cytoplasm. In terms of biological role, redox regulated molecular chaperone. Protects both thermally unfolding and oxidatively damaged proteins from irreversible aggregation. Plays an important role in the bacterial defense system toward oxidative stress. The chain is 33 kDa chaperonin from Levilactobacillus brevis (strain ATCC 367 / BCRC 12310 / CIP 105137 / JCM 1170 / LMG 11437 / NCIMB 947 / NCTC 947) (Lactobacillus brevis).